The primary structure comprises 371 residues: Cyanide hydratase (371 aa).

Positions 8–286 constitute a CN hydrolase domain; the sequence is YKAAAVQAEP…EGLMFVEIDL (279 aa). Glu-48 serves as the catalytic Proton acceptor. Lys-130 is a catalytic residue. The active-site Nucleophile is the Cys-165. Residues 326-356 form a disordered region; sequence DGGIGTYNTQDRVGLNRPLDAPKVDGPSGVS.

Belongs to the carbon-nitrogen hydrolase superfamily. Nitrilase family. As to quaternary structure, oligomer of dimers, forming left-handed helical fibers.

The enzyme catalyses formamide = hydrogen cyanide + H2O. Its function is as follows. Catalyzes the hydration of cyanide to formamide. Degradation of cyanide may be important for plant pathogenic fungi in infection of cyanogenic plants. Can also transform some nitriles like 2-cyanopyridine and fumaronitrile and has a minor activity with 4-cyanophenyl acetonitrile (4-CPA). This Botryotinia fuckeliana (strain T4) (Noble rot fungus) protein is Cyanide hydratase.